Reading from the N-terminus, the 205-residue chain is MSKRISAKHKIDRRMGENIWGRSKSPVNRREYGPGQHGQRRKGKLSDFGVQLRAKQKLKGYYGSIGEKQFHAVYVEASRLKGDTGANLIGLLERRLDAVVYRAKFVPTIFAARQFVNHGHVKVNGRRVNIPSYQVKVGDVIEVREASKQMALVLEAVQLAERDVPDYLEVDHNRLTAKFNRIPELNEVPYPVQMEPNLVVEFYSR.

Positions 19–45 are disordered; that stretch reads IWGRSKSPVNRREYGPGQHGQRRKGKL. The region spanning 94–157 is the S4 RNA-binding domain; that stretch reads RRLDAVVYRA…KQMALVLEAV (64 aa).

Belongs to the universal ribosomal protein uS4 family. In terms of assembly, part of the 30S ribosomal subunit. Contacts protein S5. The interaction surface between S4 and S5 is involved in control of translational fidelity.

One of the primary rRNA binding proteins, it binds directly to 16S rRNA where it nucleates assembly of the body of the 30S subunit. In terms of biological role, with S5 and S12 plays an important role in translational accuracy. This chain is Small ribosomal subunit protein uS4, found in Azorhizobium caulinodans (strain ATCC 43989 / DSM 5975 / JCM 20966 / LMG 6465 / NBRC 14845 / NCIMB 13405 / ORS 571).